The sequence spans 406 residues: Terminal uridylyltransferase 7 (406 aa).

Residues Met-1–His-15 constitute a mitochondrion transit peptide. UTP contacts are provided by residues Ser-54 and Ser-64–Asp-65. Mg(2+)-binding residues include Asp-65 and Asp-67. UTP contacts are provided by residues Gly-138–Ser-142, Lys-164, Lys-168, and Asn-181–Phe-183.

It belongs to the DNA polymerase type-B-like family. In terms of assembly, component of the mitochondrial RNA editing core complex-like (RECC-like), also known as the editosome-like complex; only a small proportion of MEAT1 associates with the complex. Interacts with RNA-editing ligase REL1. Requires Mg(2+) as cofactor.

It localises to the mitochondrion matrix. The enzyme catalyses RNA(n) + UTP = RNA(n)-3'-uridine ribonucleotide + diphosphate. Functionally, terminal uridylyltransferase which, as part of the mitochondrial RNA editing core-like complex (RECC-like), is involved in the post-transcriptional editing of mitochondrial RNA, a process involving the addition and deletion of uridine (U) nucleotides in the pre-mRNA. Specifically, catalyzes the addition of U to single-stranded RNA with a preference for a 3'-terminal U and adds the number of Us specified by a guide RNA (gRNA) to precleaved double-stranded RNA editing substrates. Essential for insect and bloodstream developmental forms viability. In Trypanosoma brucei brucei, this protein is Terminal uridylyltransferase 7.